The following is a 222-amino-acid chain: Small ribosomal subunit protein uS7m (222 aa).

The N-terminal 14 residues, 1-14, are a transit peptide targeting the mitochondrion; sequence MTTKLARFAQKRWI.

Belongs to the universal ribosomal protein uS7 family. In terms of assembly, component of the mitochondrial ribosome small subunit (28S) which comprises a 12S rRNA and about 30 distinct proteins.

It localises to the mitochondrion. In Caenorhabditis elegans, this protein is Small ribosomal subunit protein uS7m (mrps-7).